A 135-amino-acid polypeptide reads, in one-letter code: Probable histone H2A.2 (135 aa).

Belongs to the histone H2A family. As to quaternary structure, the nucleosome is a histone octamer containing two molecules each of H2A, H2B, H3 and H4 assembled in one H3-H4 heterotetramer and two H2A-H2B heterodimers. The octamer wraps approximately 147 bp of DNA.

Its subcellular location is the nucleus. It localises to the chromosome. Functionally, core component of nucleosome. Nucleosomes wrap and compact DNA into chromatin, limiting DNA accessibility to the cellular machineries which require DNA as a template. Histones thereby play a central role in transcription regulation, DNA repair, DNA replication and chromosomal stability. DNA accessibility is regulated via a complex set of post-translational modifications of histones, also called histone code, and nucleosome remodeling. This chain is Probable histone H2A.2, found in Oryza sativa subsp. indica (Rice).